The primary structure comprises 137 residues: Large ribosomal subunit protein uL16 (137 aa).

Residues 1-16 show a composition bias toward basic residues; it reads MLQPKRTKFRKMQKGR. A disordered region spans residues 1–22; the sequence is MLQPKRTKFRKMQKGRIRGEAK.

Belongs to the universal ribosomal protein uL16 family. As to quaternary structure, part of the 50S ribosomal subunit.

Its function is as follows. Binds 23S rRNA and is also seen to make contacts with the A and possibly P site tRNAs. This is Large ribosomal subunit protein uL16 from Jannaschia sp. (strain CCS1).